Here is a 572-residue protein sequence, read N- to C-terminus: Phosphoglucomutase-2 (572 aa).

Residues T23, R27, 126 to 127 (SH), and K140 contribute to the substrate site. Catalysis depends on S126, which acts as the Phosphoserine intermediate. Residue S126 coordinates Mg(2+). Mg(2+) is bound by residues D308, D310, and D312. Substrate contacts are provided by residues 312–313 (DR), T373, 392–394 (EES), K405, and R527.

The protein belongs to the phosphohexose mutase family. The cofactor is Mg(2+). In terms of processing, phosphorylated via a calcium-dependent protein kinase.

Its subcellular location is the cytoplasm. The catalysed reaction is alpha-D-glucose 1-phosphate = alpha-D-glucose 6-phosphate. In terms of biological role, may be involved in membrane fusion in exocytosis. The sequence is that of Phosphoglucomutase-2 (pp63-2) from Paramecium tetraurelia.